The sequence spans 206 residues: Small ribosomal subunit protein uS4 (206 aa).

The S4 RNA-binding domain occupies 96–156 (CRLDNVVYRM…EKAKNQLRIV (61 aa)).

Belongs to the universal ribosomal protein uS4 family. In terms of assembly, part of the 30S ribosomal subunit. Contacts protein S5. The interaction surface between S4 and S5 is involved in control of translational fidelity.

In terms of biological role, one of the primary rRNA binding proteins, it binds directly to 16S rRNA where it nucleates assembly of the body of the 30S subunit. Its function is as follows. With S5 and S12 plays an important role in translational accuracy. This chain is Small ribosomal subunit protein uS4, found in Pseudomonas savastanoi pv. phaseolicola (strain 1448A / Race 6) (Pseudomonas syringae pv. phaseolicola (strain 1448A / Race 6)).